The primary structure comprises 487 residues: UDP-N-acetylmuramate--L-alanine ligase (487 aa).

124 to 130 (GTHGKTT) provides a ligand contact to ATP.

Belongs to the MurCDEF family.

Its subcellular location is the cytoplasm. It catalyses the reaction UDP-N-acetyl-alpha-D-muramate + L-alanine + ATP = UDP-N-acetyl-alpha-D-muramoyl-L-alanine + ADP + phosphate + H(+). Its pathway is cell wall biogenesis; peptidoglycan biosynthesis. In terms of biological role, cell wall formation. This chain is UDP-N-acetylmuramate--L-alanine ligase, found in Acaryochloris marina (strain MBIC 11017).